We begin with the raw amino-acid sequence, 868 residues long: Facilitated trehalose transporter Tret1 (868 aa).

2 disordered regions span residues 1-213 and 257-314; these read MSGR…QKAT and KESS…LIHR. Residues 1–403 are Cytoplasmic-facing; that stretch reads MSGRDNRGAG…VYRPTTNPIY (403 aa). The span at 25–43 shows a compositional bias: basic and acidic residues; it reads KLKEKLTRAGDDQGYHRVE. 3 stretches are compositionally biased toward low complexity: residues 44–57, 79–91, and 117–126; these read SNLS…SLDT, PQQQ…QQLR, and PFQQQQQRTP. Basic and acidic residues-rich tracts occupy residues 146 to 155 and 257 to 290; these read EIREHRDRQQ and KESS…KLDK. Ser-259, Ser-260, Ser-261, Ser-331, and Ser-333 each carry phosphoserine. The interval 335–367 is disordered; it reads EDFHTSRQHFQQQRSISTDSRKSRRPYEMDEMG. Over residues 342–352 the composition is skewed to polar residues; that stretch reads QHFQQQRSIST. Over residues 353–367 the composition is skewed to basic and acidic residues; it reads DSRKSRRPYEMDEMG. A helical membrane pass occupies residues 404–424; that stretch reads IWTQVLAALSVSLGSLVVGFV. Residues 425 to 451 lie on the Extracellular side of the membrane; sequence SAYTSPALVSMTNRNMTSFEVTPQAAS. The N-linked (GlcNAc...) asparagine glycan is linked to Asn-439. The chain crosses the membrane as a helical span at residues 452–472; the sequence is WVGGIMPLAGLAGGIAGGPFI. The Cytoplasmic portion of the chain corresponds to 473 to 484; that stretch reads EYLGRRNTILAT. The chain crosses the membrane as a helical span at residues 485–505; that stretch reads AIPFIVSSLLIACAVNVAMVL. Over 506–508 the chain is Extracellular; it reads AGR. The helical transmembrane segment at 509–529 threads the bilayer; that stretch reads FLAGFCVGIASLSLPVYLGET. The Cytoplasmic portion of the chain corresponds to 530 to 535; the sequence is VQPEVR. The chain crosses the membrane as a helical span at residues 536 to 556; that stretch reads GTLGLLPTAFGNIGILLCFVA. Residues 557 to 563 lie on the Extracellular side of the membrane; the sequence is GTYMDWS. A helical membrane pass occupies residues 564–584; it reads MLAFLGAALPVPFLILMFLIP. Residues 585-653 are Cytoplasmic-facing; that stretch reads ETPRWFVSRG…NLKPLSISLG (69 aa). The helical transmembrane segment at 654–674 threads the bilayer; that stretch reads LMFFQQLSGINAVIFYTVSIF. Residues 675-684 lie on the Extracellular side of the membrane; that stretch reads KDAGSTIDGN. The chain crosses the membrane as a helical span at residues 685-705; the sequence is LCTIIVGIVNFMATFIATLLI. At 706–711 the chain is on the cytoplasmic side; that stretch reads DRAGRK. The chain crosses the membrane as a helical span at residues 712–732; the sequence is ILLYVSNIAMIITLFVLGGFF. Over 733 to 751 the chain is Extracellular; the sequence is YCKSHGQDVSQLGWLPLSC. Residues 752–772 traverse the membrane as a helical segment; it reads FVIYILGFSLGFGPIPWLMMG. Residues 773–778 lie on the Cytoplasmic side of the membrane; sequence EILPSK. A helical transmembrane segment spans residues 779-799; it reads IRGSAASVATAFNWSCTFVVT. Residues 800 to 812 are Extracellular-facing; that stretch reads KTFQDMIDFMGAH. A helical membrane pass occupies residues 813 to 833; the sequence is GAFWLFGSICFIGLFFVILYV. Residues 834 to 868 are Cytoplasmic-facing; sequence PETQGKTLEDIERKMMGRVRRMSSVANMKPLAFNM. Phosphoserine occurs at positions 856 and 857.

This sequence belongs to the major facilitator superfamily. Sugar transporter (TC 2.A.1.1) family. Trehalose transporter subfamily.

It localises to the cell membrane. Its function is as follows. Low-capacity facilitative transporter for trehalose. Does not transport maltose, sucrose or lactose. Mediates the bidirectional transfer of trehalose. Responsible for the transport of trehalose synthesized in the fat body and the incorporation of trehalose into other tissues that require a carbon source, thereby regulating trehalose levels in the hemolymph. This chain is Facilitated trehalose transporter Tret1, found in Drosophila pseudoobscura pseudoobscura (Fruit fly).